A 611-amino-acid polypeptide reads, in one-letter code: UvrABC system protein C (611 aa).

The region spanning 12–96 (DQPGIYQYFD…IKQLKPKYNI (85 aa)) is the GIY-YIG domain. The UVR domain occupies 202 to 237 (EKILEILNQKMQKYAENLQFEEAAEIRDRIKSIESA).

The protein belongs to the UvrC family. In terms of assembly, interacts with UvrB in an incision complex.

It localises to the cytoplasm. Its function is as follows. The UvrABC repair system catalyzes the recognition and processing of DNA lesions. UvrC both incises the 5' and 3' sides of the lesion. The N-terminal half is responsible for the 3' incision and the C-terminal half is responsible for the 5' incision. The polypeptide is UvrABC system protein C (Nautilia profundicola (strain ATCC BAA-1463 / DSM 18972 / AmH)).